The chain runs to 217 residues: Small ribosomal subunit protein uS3 (217 aa).

Positions 40-110 constitute a KH type-2 domain; it reads IRDLINKGFN…EVYINIHEVR (71 aa).

This sequence belongs to the universal ribosomal protein uS3 family. In terms of assembly, part of the 30S ribosomal subunit. Forms a tight complex with proteins S10 and S14.

Binds the lower part of the 30S subunit head. Binds mRNA in the 70S ribosome, positioning it for translation. The polypeptide is Small ribosomal subunit protein uS3 (Rickettsia akari (strain Hartford)).